The sequence spans 78 residues: Large ribosomal subunit protein bL28 (78 aa).

The protein belongs to the bacterial ribosomal protein bL28 family.

This chain is Large ribosomal subunit protein bL28, found in Hamiltonella defensa subsp. Acyrthosiphon pisum (strain 5AT).